The primary structure comprises 613 residues: Glutaminase 1 (613 aa).

The glutaminase stretch occupies residues 33–315; the sequence is GAVADYIPEL…LSSHYDLHML (283 aa). 7 residues coordinate substrate: S75, N124, E168, N175, Y199, Y251, and V269. The region spanning 345 to 457 is the STAS domain; sequence REILAAHEQE…LDTAIEWAED (113 aa). A nucleoside 3',5'-cyclic phosphate is bound at residue 480–595; the sequence is LLEGLSADEL…ERIMRNLAQL (116 aa).

It belongs to the glutaminase family. Homotetramer.

The enzyme catalyses L-glutamine + H2O = L-glutamate + NH4(+). The sequence is that of Glutaminase 1 (glsA1) from Bradyrhizobium diazoefficiens (strain JCM 10833 / BCRC 13528 / IAM 13628 / NBRC 14792 / USDA 110).